Here is a 304-residue protein sequence, read N- to C-terminus: Beta-lactamase AER-1 (304 aa).

The N-terminal stretch at 1 to 37 is a signal peptide; it reads MYVLSVEKPTLRNKFAAGIGVVLVCVVASFIPTPVFA. Residue serine 83 is the Acyl-ester intermediate of the active site. Cysteines 90 and 137 form a disulfide. The tract at residues 173–195 is disordered; sequence ETQLDRKEPELNEGTPGDVRDTT. Residue 248-250 coordinates substrate; sequence KTG.

It belongs to the class-A beta-lactamase family.

The catalysed reaction is a beta-lactam + H2O = a substituted beta-amino acid. Its function is as follows. Hydrolyzes carbenicillin. Methicillin and oxacillin are weakly hydrolyzed. This is Beta-lactamase AER-1 (aer1) from Aeromonas hydrophila.